Consider the following 200-residue polypeptide: A-type ATP synthase subunit E (200 aa).

The protein belongs to the V-ATPase E subunit family. Has multiple subunits with at least A(3), B(3), C, D, E, F, H, I and proteolipid K(x).

The protein resides in the cell membrane. Component of the A-type ATP synthase that produces ATP from ADP in the presence of a proton gradient across the membrane. The polypeptide is A-type ATP synthase subunit E (Aeropyrum pernix (strain ATCC 700893 / DSM 11879 / JCM 9820 / NBRC 100138 / K1)).